We begin with the raw amino-acid sequence, 158 residues long: Secreted RxLR effector protein 2 (158 aa).

Positions Met-1–Ala-21 are cleaved as a signal peptide. Positions Arg-54–Arg-75 match the RxLR-dEER motif.

This sequence belongs to the RxLR effector family.

It localises to the secreted. The protein resides in the host cell. Functionally, secreted effector that completely suppresses elicitor-induced cell death in host and enhances virulence of P.parasitica. The sequence is that of Secreted RxLR effector protein 2 from Phytophthora nicotianae (Potato buckeye rot agent).